Reading from the N-terminus, the 493-residue chain is Glutamyl-tRNA(Gln) amidotransferase subunit A (493 aa).

Residues lysine 78 and serine 158 each act as charge relay system in the active site. Residue serine 182 is the Acyl-ester intermediate of the active site.

The protein belongs to the amidase family. GatA subfamily. As to quaternary structure, heterotrimer of A, B and C subunits.

The catalysed reaction is L-glutamyl-tRNA(Gln) + L-glutamine + ATP + H2O = L-glutaminyl-tRNA(Gln) + L-glutamate + ADP + phosphate + H(+). Allows the formation of correctly charged Gln-tRNA(Gln) through the transamidation of misacylated Glu-tRNA(Gln) in organisms which lack glutaminyl-tRNA synthetase. The reaction takes place in the presence of glutamine and ATP through an activated gamma-phospho-Glu-tRNA(Gln). This is Glutamyl-tRNA(Gln) amidotransferase subunit A from Rickettsia felis (strain ATCC VR-1525 / URRWXCal2) (Rickettsia azadi).